A 955-amino-acid chain; its full sequence is Leucine--tRNA ligase (955 aa).

The 'HIGH' region signature appears at 51-61; sequence PYLNGVLHAGH. Residues 647 to 651 carry the 'KMSKS' region motif; sequence KLSKS. Position 650 (K650) interacts with ATP.

It belongs to the class-I aminoacyl-tRNA synthetase family.

The protein localises to the cytoplasm. The enzyme catalyses tRNA(Leu) + L-leucine + ATP = L-leucyl-tRNA(Leu) + AMP + diphosphate. This Methanococcus maripaludis (strain C7 / ATCC BAA-1331) protein is Leucine--tRNA ligase.